The following is a 59-amino-acid chain: uncharacterized protein (59 aa).

A helical membrane pass occupies residues 7 to 24 (FLLVFIILAQLLSCTPSA).

It is found in the membrane. This is an uncharacterized protein from Rickettsia prowazekii (strain Madrid E).